We begin with the raw amino-acid sequence, 595 residues long: Zinc finger protein 467 (595 aa).

A disordered region spans residues 1–67 (MRETLEALSS…EEGAHTEQAE (67 aa)). Residue K97 forms a Glycyl lysine isopeptide (Lys-Gly) (interchain with G-Cter in SUMO2) linkage. 6 C2H2-type zinc fingers span residues 160–182 (YGCG…QRLH), 188–210 (CACP…QRSH), 216–238 (FPCS…LRTH), 244–266 (YPCA…QKTH), 272–294 (FPCT…QRIH), and 300–322 (YQCA…QRVH). A disordered region spans residues 313–350 (QHLVRHQRVHQTAGPARPSPDSSASPHSTAPSPTPSFP). Residues 325–343 (AGPARPSPDSSASPHSTAP) show a composition bias toward low complexity. C2H2-type zinc fingers lie at residues 355-377 (FACS…QCLH), 431-453 (FFCP…PRVH), 459-481 (FACT…SRAH), 487-509 (FACA…QAVH), 515-537 (HACA…QAIH), and 543-565 (FSCP…QLIH). K368 participates in a covalent cross-link: Glycyl lysine isopeptide (Lys-Gly) (interchain with G-Cter in SUMO2).

The protein belongs to the krueppel C2H2-type zinc-finger protein family. As to quaternary structure, interacts with STAT3. Enhances STAT3 activity by keeping it in the nucleus.

It localises to the nucleus. Functionally, transcription factor that promotes adipocyte differentiation and suppresses osteoblast differentiation in the bone marrow. Enhances the osteoclast-supporting ability of stromal cells. Binds with STAT3 the consensus sequence 5'-CTTCTGGGAAGA-3' of the acute phase response element (APRE). Transactivates several promoters including FOS, OSM and PPARG. Recruits a histone deacetylase complex. The protein is Zinc finger protein 467 (ZNF467) of Homo sapiens (Human).